Here is a 577-residue protein sequence, read N- to C-terminus: Arginine--tRNA ligase (577 aa).

Positions proline 123–histidine 133 match the 'HIGH' region motif.

Belongs to the class-I aminoacyl-tRNA synthetase family. Monomer.

The protein localises to the cytoplasm. It carries out the reaction tRNA(Arg) + L-arginine + ATP = L-arginyl-tRNA(Arg) + AMP + diphosphate. This is Arginine--tRNA ligase from Cronobacter sakazakii (strain ATCC BAA-894) (Enterobacter sakazakii).